Here is a 517-residue protein sequence, read N- to C-terminus: PSTB2-interacting protein 1 (517 aa).

In terms of assembly, interacts with PDR17/PSTB2 and SCS2.

Functionally, phosphatidic acid-binding protein involved in interorganelle phosphatidylserine (PtdSer) transport. Linkks a PtdSer donor membrane (via binding of SCS2 and phosphatidic acid present in the donor membrane) with an acceptor membrane (via its interaction with PDR17), forming a zone of apposition that facilitates PtdSer transfer. The protein is PSTB2-interacting protein 1 of Saccharomyces cerevisiae (strain ATCC 204508 / S288c) (Baker's yeast).